The chain runs to 273 residues: Phosphatidylglycerol--prolipoprotein diacylglyceryl transferase (273 aa).

Helical transmembrane passes span 18 to 38 (IPVR…YVVG), 47 to 67 (LPED…IICA), 89 to 109 (IWNG…TAYI), and 116 to 136 (VSFL…QIIG). Arginine 137 is a binding site for a 1,2-diacyl-sn-glycero-3-phospho-(1'-sn-glycerol). Helical transmembrane passes span 178 to 198 (VHPT…ILLI), 207 to 227 (GEIF…IEGM), and 238 to 258 (LRSA…AIIY).

This sequence belongs to the Lgt family.

Its subcellular location is the cell membrane. It catalyses the reaction L-cysteinyl-[prolipoprotein] + a 1,2-diacyl-sn-glycero-3-phospho-(1'-sn-glycerol) = an S-1,2-diacyl-sn-glyceryl-L-cysteinyl-[prolipoprotein] + sn-glycerol 1-phosphate + H(+). It participates in protein modification; lipoprotein biosynthesis (diacylglyceryl transfer). Its function is as follows. Catalyzes the transfer of the diacylglyceryl group from phosphatidylglycerol to the sulfhydryl group of the N-terminal cysteine of a prolipoprotein, the first step in the formation of mature lipoproteins. The polypeptide is Phosphatidylglycerol--prolipoprotein diacylglyceryl transferase (Lysinibacillus sphaericus (strain C3-41)).